The sequence spans 38 residues: Photosystem II reaction center protein L (38 aa).

The chain crosses the membrane as a helical span at residues 17–37 (SLYWGLLLIFVLAILFSNYIF).

Belongs to the PsbL family. In terms of assembly, PSII is composed of 1 copy each of membrane proteins PsbA, PsbB, PsbC, PsbD, PsbE, PsbF, PsbH, PsbI, PsbJ, PsbK, PsbL, PsbM, PsbT, PsbX, PsbY, PsbZ, Psb30/Ycf12, at least 3 peripheral proteins of the oxygen-evolving complex and a large number of cofactors. It forms dimeric complexes.

The protein localises to the plastid. It localises to the chloroplast thylakoid membrane. One of the components of the core complex of photosystem II (PSII). PSII is a light-driven water:plastoquinone oxidoreductase that uses light energy to abstract electrons from H(2)O, generating O(2) and a proton gradient subsequently used for ATP formation. It consists of a core antenna complex that captures photons, and an electron transfer chain that converts photonic excitation into a charge separation. This subunit is found at the monomer-monomer interface and is required for correct PSII assembly and/or dimerization. The sequence is that of Photosystem II reaction center protein L from Chlorokybus atmophyticus (Soil alga).